The sequence spans 125 residues: Translation initiation factor 5A (125 aa).

Position 35 is a hypusine (Lys35).

It belongs to the eIF-5A family.

It localises to the cytoplasm. Functions by promoting the formation of the first peptide bond. This Methanosphaerula palustris (strain ATCC BAA-1556 / DSM 19958 / E1-9c) protein is Translation initiation factor 5A (eIF5A).